The following is a 208-amino-acid chain: Probable GTP-binding protein EngB (208 aa).

The EngB-type G domain maps to Thr-25–Gly-199. GTP-binding positions include Gly-33 to Ser-40, Gly-60 to Leu-64, Asp-78 to Gly-81, Thr-145 to Asp-148, and Phe-178 to Ser-180. Ser-40 and Thr-62 together coordinate Mg(2+).

It belongs to the TRAFAC class TrmE-Era-EngA-EngB-Septin-like GTPase superfamily. EngB GTPase family. The cofactor is Mg(2+).

In terms of biological role, necessary for normal cell division and for the maintenance of normal septation. The chain is Probable GTP-binding protein EngB from Enterobacter sp. (strain 638).